A 569-amino-acid chain; its full sequence is Glutamyl-tRNA reductase (569 aa).

Substrate contacts are provided by residues 49–52, Ser-109, 114–116, and Gln-120; these read TCNR and EGQ. Residue Cys-50 is the Nucleophile of the active site. Residue 192-197 participates in NADP(+) binding; sequence GAGSMS. The tract at residues 284-397 is insert; that stretch reads PVAVREETPA…VEAPRPAPAL (114 aa). Residues 546–569 form a disordered region; sequence AAVSRADDRDTSDSTENAKNRGRE. Over residues 550-569 the composition is skewed to basic and acidic residues; that stretch reads RADDRDTSDSTENAKNRGRE.

The protein belongs to the glutamyl-tRNA reductase family. Homodimer.

The catalysed reaction is (S)-4-amino-5-oxopentanoate + tRNA(Glu) + NADP(+) = L-glutamyl-tRNA(Glu) + NADPH + H(+). It participates in porphyrin-containing compound metabolism; protoporphyrin-IX biosynthesis; 5-aminolevulinate from L-glutamyl-tRNA(Glu): step 1/2. In terms of biological role, catalyzes the NADPH-dependent reduction of glutamyl-tRNA(Glu) to glutamate 1-semialdehyde (GSA). This chain is Glutamyl-tRNA reductase, found in Streptomyces avermitilis (strain ATCC 31267 / DSM 46492 / JCM 5070 / NBRC 14893 / NCIMB 12804 / NRRL 8165 / MA-4680).